We begin with the raw amino-acid sequence, 158 residues long: ATP synthase subunit b' (158 aa).

A helical transmembrane segment spans residues 24–44; the sequence is ATLPLMAVQILVLVFLLNAVF.

Belongs to the ATPase B chain family. As to quaternary structure, F-type ATPases have 2 components, F(1) - the catalytic core - and F(0) - the membrane proton channel. F(1) has five subunits: alpha(3), beta(3), gamma(1), delta(1), epsilon(1). F(0) has four main subunits: a(1), b(1), b'(1) and c(10-14). The alpha and beta chains form an alternating ring which encloses part of the gamma chain. F(1) is attached to F(0) by a central stalk formed by the gamma and epsilon chains, while a peripheral stalk is formed by the delta, b and b' chains.

The protein resides in the cellular thylakoid membrane. In terms of biological role, f(1)F(0) ATP synthase produces ATP from ADP in the presence of a proton or sodium gradient. F-type ATPases consist of two structural domains, F(1) containing the extramembraneous catalytic core and F(0) containing the membrane proton channel, linked together by a central stalk and a peripheral stalk. During catalysis, ATP synthesis in the catalytic domain of F(1) is coupled via a rotary mechanism of the central stalk subunits to proton translocation. Functionally, component of the F(0) channel, it forms part of the peripheral stalk, linking F(1) to F(0). The b'-subunit is a diverged and duplicated form of b found in plants and photosynthetic bacteria. The protein is ATP synthase subunit b' of Synechococcus elongatus (strain ATCC 33912 / PCC 7942 / FACHB-805) (Anacystis nidulans R2).